Reading from the N-terminus, the 186-residue chain is Elongation factor P (186 aa).

This sequence belongs to the elongation factor P family.

The protein localises to the cytoplasm. It functions in the pathway protein biosynthesis; polypeptide chain elongation. Involved in peptide bond synthesis. Stimulates efficient translation and peptide-bond synthesis on native or reconstituted 70S ribosomes in vitro. Probably functions indirectly by altering the affinity of the ribosome for aminoacyl-tRNA, thus increasing their reactivity as acceptors for peptidyl transferase. This Cupriavidus metallidurans (strain ATCC 43123 / DSM 2839 / NBRC 102507 / CH34) (Ralstonia metallidurans) protein is Elongation factor P.